The following is a 197-amino-acid chain: ATP-dependent Clp protease proteolytic subunit 1 (197 aa).

The active-site Nucleophile is Ser-99. The active site involves His-124.

The protein belongs to the peptidase S14 family. In terms of assembly, fourteen ClpP subunits assemble into 2 heptameric rings which stack back to back to give a disk-like structure with a central cavity, resembling the structure of eukaryotic proteasomes.

It localises to the cytoplasm. It catalyses the reaction Hydrolysis of proteins to small peptides in the presence of ATP and magnesium. alpha-casein is the usual test substrate. In the absence of ATP, only oligopeptides shorter than five residues are hydrolyzed (such as succinyl-Leu-Tyr-|-NHMec, and Leu-Tyr-Leu-|-Tyr-Trp, in which cleavage of the -Tyr-|-Leu- and -Tyr-|-Trp bonds also occurs).. In terms of biological role, cleaves peptides in various proteins in a process that requires ATP hydrolysis. Has a chymotrypsin-like activity. Plays a major role in the degradation of misfolded proteins. This is ATP-dependent Clp protease proteolytic subunit 1 from Treponema denticola (strain ATCC 35405 / DSM 14222 / CIP 103919 / JCM 8153 / KCTC 15104).